The following is a 92-amino-acid chain: Small ribosomal subunit protein uS19 (92 aa).

Belongs to the universal ribosomal protein uS19 family.

Its function is as follows. Protein S19 forms a complex with S13 that binds strongly to the 16S ribosomal RNA. This is Small ribosomal subunit protein uS19 from Corynebacterium efficiens (strain DSM 44549 / YS-314 / AJ 12310 / JCM 11189 / NBRC 100395).